Reading from the N-terminus, the 364-residue chain is Dimethylsulfoniopropionate demethylase DmdA (364 aa).

Belongs to the GcvT family. DmdA subfamily.

It catalyses the reaction S,S-dimethyl-beta-propiothetin + (6S)-5,6,7,8-tetrahydrofolate = 3-(methylsulfanyl)propanoate + (6S)-5-methyl-5,6,7,8-tetrahydrofolate + H(+). Its function is as follows. Involved in the assimilation of dimethylsulphoniopropionate (DMSP), an important compound in the fixation of carbon in marine phytoplankton, by mediating demethylation of dimethylsulfoniopropionate (DMSP) to methyl-mercaptopropionate (MMPA). The intracellular concentration of DMSP is estimated to be 70 mM. In Ruegeria pomeroyi (strain ATCC 700808 / DSM 15171 / DSS-3) (Silicibacter pomeroyi), this protein is Dimethylsulfoniopropionate demethylase DmdA.